A 549-amino-acid chain; its full sequence is Antagonist of mitotic exit network protein 1 (549 aa).

Residues 1–11 (MKLERVSSNGS) show a composition bias toward polar residues. Residues 1 to 39 (MKLERVSSNGSFKRGRDIQSLESPCTRPLKKMSPSPSFT) form a disordered region.

It belongs to the AMN1 family. In terms of assembly, interacts with TEM1.

It localises to the cytoplasm. The protein localises to the nucleus. Negative regulator of the mitotic exit network (MEN), required for multiple cell cycle checkpoints. Acts in the daughter cell to inhibit the mitotic exit pathway once MEN has executed its function. Through its binding ability to TEM1, interferes with the TEM1-CDC5 association, required for CDC5 kinase activation and MEN activation. Required for daughter cell separation and chromosome stability. Involved in copper sensitivity. The protein is Antagonist of mitotic exit network protein 1 (AMN1) of Saccharomyces cerevisiae (strain ATCC 204508 / S288c) (Baker's yeast).